Reading from the N-terminus, the 214-residue chain is Probable nicotinate-nucleotide adenylyltransferase (214 aa).

The protein belongs to the NadD family.

The catalysed reaction is nicotinate beta-D-ribonucleotide + ATP + H(+) = deamido-NAD(+) + diphosphate. It functions in the pathway cofactor biosynthesis; NAD(+) biosynthesis; deamido-NAD(+) from nicotinate D-ribonucleotide: step 1/1. Functionally, catalyzes the reversible adenylation of nicotinate mononucleotide (NaMN) to nicotinic acid adenine dinucleotide (NaAD). This is Probable nicotinate-nucleotide adenylyltransferase from Pelodictyon phaeoclathratiforme (strain DSM 5477 / BU-1).